The primary structure comprises 406 residues: F-box/WD repeat-containing protein mec-15 (406 aa).

The F-box domain occupies 6-53 (PTELISLPSELLCHLFTYLPQRQLITEIPLVCRRFNTILNDDKFWSRR). 5 WD repeats span residues 101–142 (GHSA…NGED), 156–195 (AHSGWIWNMAQESTSTNFYTTSWDSTVKSWHITDNGALQN), 242–279 (LHKRAVIALAVQGDKIFTSGEDRLMMMVDRRNFSKPVL), 281–320 (EYSPTAYKSCLSLQCNQLLTSTSDGKVKLYDANNFNVLQT), and 365–406 (SHEL…DQEN).

May interact with the SCF ubiquitin ligase complex component skr-1. In terms of tissue distribution, expressed in several neurons in the head, tail and ventral cord, but absent in touch receptor neurons in adults. Expressed in GABAergic and cholinergic motor neurons.

The protein resides in the perikaryon. Plays a role in mechanosensory transduction (touch sensitivity), touch receptor neuron development and synapse formation. Regulates expression of the protein snb-1 and the distribution of synaptic vesicles at synapses to promote synaptic transmission at the neuromuscular junctions of GABAergic motor neurons. The chain is F-box/WD repeat-containing protein mec-15 from Caenorhabditis elegans.